Reading from the N-terminus, the 509-residue chain is Proline-rich receptor-like protein kinase PERK15 (509 aa).

The tract at residues 1–44 is disordered; the sequence is MSTDTIPSLSSPPAPEFPSTTPDTATSPAPSQPSIIGPSSLAPF. Residues 1–61 are Extracellular-facing; it reads MSTDTIPSLS…DGGSRNVALT (61 aa). The span at 18-34 shows a compositional bias: low complexity; that stretch reads PSTTPDTATSPAPSQPS. The helical transmembrane segment at 62–82 threads the bilayer; it reads GLITGVVLGATFVLLGVCIFV. Residues 83–509 lie on the Cytoplasmic side of the membrane; sequence CFYKRKKRKL…IEPEKNTKDT (427 aa). Residue T132 is modified to Phosphothreonine. The region spanning 143-423 is the Protein kinase domain; it reads FSNTNLLGQG…VRAFEGNISI (281 aa). Residues 149–157 and K171 contribute to the ATP site; that span reads LGQGGFGYV. Y216 bears the Phosphotyrosine mark. Residue D267 is the Proton acceptor of the active site. At S300 the chain carries Phosphoserine. 2 positions are modified to phosphothreonine: T301 and T306. Y314 is subject to Phosphotyrosine. Over residues 468–499 the composition is skewed to polar residues; it reads FGSSECSGLTSDNGQNPSGSSSITEGQRTTQE. A disordered region spans residues 468–509; sequence FGSSECSGLTSDNGQNPSGSSSITEGQRTTQEIEPEKNTKDT.

It belongs to the protein kinase superfamily. Ser/Thr protein kinase family. Mostly expressed in inflorescence bolts, and, to a lower extent, in flower buds and siliques.

The protein resides in the cell membrane. It carries out the reaction L-seryl-[protein] + ATP = O-phospho-L-seryl-[protein] + ADP + H(+). The catalysed reaction is L-threonyl-[protein] + ATP = O-phospho-L-threonyl-[protein] + ADP + H(+). The protein is Proline-rich receptor-like protein kinase PERK15 (PERK15) of Arabidopsis thaliana (Mouse-ear cress).